The sequence spans 409 residues: Peptidase T (409 aa).

Residue His-78 coordinates Zn(2+). The active site involves Asp-80. Residue Asp-139 coordinates Zn(2+). Residue Glu-173 is the Proton acceptor of the active site. Residues Glu-174, Asp-196, and His-378 each coordinate Zn(2+).

Belongs to the peptidase M20B family. The cofactor is Zn(2+).

The protein localises to the cytoplasm. It carries out the reaction Release of the N-terminal residue from a tripeptide.. In terms of biological role, cleaves the N-terminal amino acid of tripeptides. The sequence is that of Peptidase T from Shewanella sediminis (strain HAW-EB3).